A 311-amino-acid chain; its full sequence is Nod factor export ATP-binding protein I (311 aa).

Residues 13–243 (IDLAGVSKSY…QIGCPVIEIY (231 aa)) enclose the ABC transporter domain. ATP is bound at residue 45–52 (GPNGAGKS).

Belongs to the ABC transporter superfamily. Lipooligosaccharide exporter (TC 3.A.1.102) family. In terms of assembly, the complex is composed of two ATP-binding proteins (NodI) and two transmembrane proteins (NodJ).

It localises to the cell inner membrane. Its function is as follows. Part of the ABC transporter complex NodIJ involved in the export of the nodulation factors (Nod factors), the bacterial signal molecules that induce symbiosis and subsequent nodulation induction. Nod factors are LCO (lipo-chitin oligosaccharide), a modified beta-1,4-linked N-acetylglucosamine oligosaccharide. This subunit is responsible for energy coupling to the transport system. This Rhizobium leguminosarum bv. viciae protein is Nod factor export ATP-binding protein I.